Reading from the N-terminus, the 130-residue chain is Small ribosomal subunit protein uS9 (130 aa).

This sequence belongs to the universal ribosomal protein uS9 family.

This Cupriavidus metallidurans (strain ATCC 43123 / DSM 2839 / NBRC 102507 / CH34) (Ralstonia metallidurans) protein is Small ribosomal subunit protein uS9.